A 161-amino-acid polypeptide reads, in one-letter code: Large ribosomal subunit protein uL11 (161 aa).

This sequence belongs to the universal ribosomal protein uL11 family. As to quaternary structure, part of the ribosomal stalk of the 50S ribosomal subunit. Interacts with L10 and the large rRNA to form the base of the stalk. L10 forms an elongated spine to which L12 dimers bind in a sequential fashion forming a multimeric L10(L12)X complex.

Forms part of the ribosomal stalk which helps the ribosome interact with GTP-bound translation factors. The polypeptide is Large ribosomal subunit protein uL11 (Methanosarcina mazei (strain ATCC BAA-159 / DSM 3647 / Goe1 / Go1 / JCM 11833 / OCM 88) (Methanosarcina frisia)).